The following is a 306-amino-acid chain: Ribonuclease Z (306 aa).

Zn(2+) contacts are provided by His-63, His-65, Asp-67, His-68, His-140, Asp-211, and His-269. The active-site Proton acceptor is Asp-67.

It belongs to the RNase Z family. Homodimer. Requires Zn(2+) as cofactor.

The catalysed reaction is Endonucleolytic cleavage of RNA, removing extra 3' nucleotides from tRNA precursor, generating 3' termini of tRNAs. A 3'-hydroxy group is left at the tRNA terminus and a 5'-phosphoryl group is left at the trailer molecule.. Zinc phosphodiesterase, which displays some tRNA 3'-processing endonuclease activity. Probably involved in tRNA maturation, by removing a 3'-trailer from precursor tRNA. This Listeria monocytogenes serotype 4b (strain CLIP80459) protein is Ribonuclease Z.